A 375-amino-acid chain; its full sequence is MRALLALEDGFVLEGRSFTGPGETGGEAIFNTGMTGYQEVLTDPSYAGQMVCMTYPLVGNYGVTREDMESGKVHVEAFIVKECCKVPSNWRSEISLPDYLKRHGVMGIEGIDTRALTRHLRIHGAMRGVISTQETDPARLVERARALPSMEGQNLVTRVAPAAPYRWDGERPQAVTLEPGGCAWVGKGPRLVVYDFGIKWNILRLLAQQGFDMLVVPPSFKAADVAAVGAQAVFLSNGPGDPATLKDEIAEIAKLAQTYPTAGICLGHQLLGHALGGRTMKLKFGHHGCNHPVKDLTTGRIEISSQNHGFCVDIDSLTDVEITHVNLNDGTLEGFAHKTKPVIAVQHHPEASPGPNDSRYFFARFRNMVREAAGC.

The interval 1–186 (MRALLALEDG…LEPGGCAWVG (186 aa)) is CPSase. L-glutamine contacts are provided by Ser-45, Gly-238, and Gly-240. One can recognise a Glutamine amidotransferase type-1 domain in the interval 190–375 (RLVVYDFGIK…RNMVREAAGC (186 aa)). The active-site Nucleophile is the Cys-265. Residues Leu-266, Gln-269, Asn-307, Gly-309, and Phe-310 each coordinate L-glutamine. Active-site residues include His-348 and Glu-350.

Belongs to the CarA family. In terms of assembly, composed of two chains; the small (or glutamine) chain promotes the hydrolysis of glutamine to ammonia, which is used by the large (or ammonia) chain to synthesize carbamoyl phosphate. Tetramer of heterodimers (alpha,beta)4.

The enzyme catalyses hydrogencarbonate + L-glutamine + 2 ATP + H2O = carbamoyl phosphate + L-glutamate + 2 ADP + phosphate + 2 H(+). It carries out the reaction L-glutamine + H2O = L-glutamate + NH4(+). The protein operates within amino-acid biosynthesis; L-arginine biosynthesis; carbamoyl phosphate from bicarbonate: step 1/1. It functions in the pathway pyrimidine metabolism; UMP biosynthesis via de novo pathway; (S)-dihydroorotate from bicarbonate: step 1/3. Its function is as follows. Small subunit of the glutamine-dependent carbamoyl phosphate synthetase (CPSase). CPSase catalyzes the formation of carbamoyl phosphate from the ammonia moiety of glutamine, carbonate, and phosphate donated by ATP, constituting the first step of 2 biosynthetic pathways, one leading to arginine and/or urea and the other to pyrimidine nucleotides. The small subunit (glutamine amidotransferase) binds and cleaves glutamine to supply the large subunit with the substrate ammonia. The protein is Carbamoyl phosphate synthase small chain of Nitratidesulfovibrio vulgaris (strain ATCC 29579 / DSM 644 / CCUG 34227 / NCIMB 8303 / VKM B-1760 / Hildenborough) (Desulfovibrio vulgaris).